A 109-amino-acid polypeptide reads, in one-letter code: MSASELATSYAALILADEGIEITSDKLLSLTKAGNVEVEPIWATIFAKALEGKDLKELLLNIGSAGAASAPTAAGAGAAAPAEAAEEEKKEEAKEEEESDEDMGFGLFD.

Residues 68–83 (ASAPTAAGAGAAAPAE) are compositionally biased toward low complexity. Positions 68 to 109 (ASAPTAAGAGAAAPAEAAEEEKKEEAKEEEESDEDMGFGLFD) are disordered. The span at 94 to 103 (KEEEESDEDM) shows a compositional bias: acidic residues. Ser99 carries the post-translational modification Phosphoserine.

Belongs to the eukaryotic ribosomal protein P1/P2 family. Component of the large ribosomal subunit (LSU). Mature yeast ribosomes consist of a small (40S) and a large (60S) subunit. The 40S small subunit contains 1 molecule of ribosomal RNA (18S rRNA) and at least 33 different proteins. The large 60S subunit contains 3 rRNA molecules (25S, 5.8S and 5S rRNA) and at least 46 different proteins. The acidic ribosomal P-proteins form the stalk structure of the 60S subunit. They are organized as a pentameric complex in which uL10/P0 interacts with 2 heterodimers of P1 and P2 proteins.

The protein resides in the cytoplasm. In terms of biological role, component of the ribosome, a large ribonucleoprotein complex responsible for the synthesis of proteins in the cell. The small ribosomal subunit (SSU) binds messenger RNAs (mRNAs) and translates the encoded message by selecting cognate aminoacyl-transfer RNA (tRNA) molecules. The large subunit (LSU) contains the ribosomal catalytic site termed the peptidyl transferase center (PTC), which catalyzes the formation of peptide bonds, thereby polymerizing the amino acids delivered by tRNAs into a polypeptide chain. The nascent polypeptides leave the ribosome through a tunnel in the LSU and interact with protein factors that function in enzymatic processing, targeting, and the membrane insertion of nascent chains at the exit of the ribosomal tunnel. The protein is Large ribosomal subunit protein P1C (rpp103) of Schizosaccharomyces pombe (strain 972 / ATCC 24843) (Fission yeast).